The sequence spans 154 residues: UPF0225 protein YPTB2098 (154 aa).

The protein belongs to the UPF0225 family.

The polypeptide is UPF0225 protein YPTB2098 (Yersinia pseudotuberculosis serotype I (strain IP32953)).